The primary structure comprises 337 residues: 2-ketoarginine methyltransferase (337 aa).

It belongs to the 2-ketoarginine methyltransferase family.

It catalyses the reaction 5-guanidino-2-oxopentanoate + S-adenosyl-L-methionine = (3R)-5-guanidino-3-methyl-2-oxopentanoate + S-adenosyl-L-homocysteine + H(+). It functions in the pathway antibiotic biosynthesis. S-adenosyl-L-methionine-dependent methyltransferase involved in the formation of the rare amino acid 3-methylarginine (MeArg), which is incorporated into the peptidyl nucleoside antibiotic arginomycin. Transfers the methyl group from S-adenosyl-L-methionine into 5-guanidino-2-oxopentanoate acid to yield 5-guanidino-3-methyl-2-oxopentanoate, a precursor of MeArg. This is 2-ketoarginine methyltransferase from Streptomyces arginensis.